The primary structure comprises 329 residues: GTP 3',8-cyclase (329 aa).

Residues 8 to 229 form the Radical SAM core domain; the sequence is AFARTFYYLR…AGWQRRLPGR (222 aa). Arg17 serves as a coordination point for GTP. Positions 24 and 28 each coordinate [4Fe-4S] cluster. Tyr30 is an S-adenosyl-L-methionine binding site. A [4Fe-4S] cluster-binding site is contributed by Cys31. Residue Arg68 coordinates GTP. Residue Gly72 coordinates S-adenosyl-L-methionine. Residue Thr99 coordinates GTP. Position 123 (Ser123) interacts with S-adenosyl-L-methionine. Lys160 is a GTP binding site. An S-adenosyl-L-methionine-binding site is contributed by Met194. The [4Fe-4S] cluster site is built by Cys257 and Cys260. Position 262-264 (262-264) interacts with GTP; that stretch reads RLR. Residue Cys274 participates in [4Fe-4S] cluster binding.

Belongs to the radical SAM superfamily. MoaA family. As to quaternary structure, monomer and homodimer. [4Fe-4S] cluster is required as a cofactor.

The catalysed reaction is GTP + AH2 + S-adenosyl-L-methionine = (8S)-3',8-cyclo-7,8-dihydroguanosine 5'-triphosphate + 5'-deoxyadenosine + L-methionine + A + H(+). Its pathway is cofactor biosynthesis; molybdopterin biosynthesis. Functionally, catalyzes the cyclization of GTP to (8S)-3',8-cyclo-7,8-dihydroguanosine 5'-triphosphate. This Edwardsiella ictaluri (strain 93-146) protein is GTP 3',8-cyclase.